Consider the following 424-residue polypeptide: Protein maelstrom 1 (424 aa).

The HMG box DNA-binding region spans 2 to 69; the sequence is PPKKHSGFMM…LTRVKKERLN (68 aa).

The protein belongs to the maelstrom family.

Its subcellular location is the cytoplasm. The protein resides in the nucleus. Involved both in the piRNA and miRNA metabolic processes. As a component of the meiotic nuage, plays a central role during oogenesis by repressing transposable elements and preventing their mobilization, which is essential for the germline integrity. Repression of transposable elements is mediated via the piRNA metabolic process, which mediates the repression of transposable elements during meiosis by forming complexes composed of piRNAs and Piwi proteins and governs the repression of transposons. As a nuclear component, it is required for proper differentiation in the germline stem cell (GSC) lineage by repressing microRNA-7 (miR-7), thereby acting as an indirect regulator of bag-of-marbles (Bam). Acts by binding to the promoter of miR-7 gene and repressing its expression; miR-7 repression alleviates the Bam repression by miR-7, thereby allowing differentiation in the germline stem cell (GSC) lineage. In Drosophila ananassae (Fruit fly), this protein is Protein maelstrom 1 (mael1).